The sequence spans 467 residues: MLTPVVSYTTVREVKGPLIVIEKTRGVSYGEVGEVIGPDGEPRRVQVIEVGTDYAVAQVLGGTLGLPAKGSTVRFYGKTLKIPVSEQLIGRILDGKGQPRDHMPLPPPEDFRDVNGEPLNPYSREYPEEPIETGISAIDGLYTLVRGQKLPIFSGTGLPHNLMAAQVVRQATVRGSEEEFAVVFVGVGIKTEEALFFMDEFRKTGALRRAVAVLNLASDPVAERILAPRVGLTIGEYLAWQLGYHVLVVITDMTNYCEGLRELSSGRGELPGRRGYPGYMYTDLATIYERAGRARGRRGSVTQFPILTMPHDDITHPIPDLTGYITEGQLVLSRAMWGKGIYPPFDVIMSLSRLAKDAIGEGKTREDHKDVANTLIAAYSKALEIRNLATLVGERNLGWRERRYLRFADAFEQRFIKQGYYERRSFEETLDIGWDVLSILPEDELTNARPQITQKFYRRHIFESVQL.

Positions 95-114 (GKGQPRDHMPLPPPEDFRDV) are disordered.

The protein belongs to the ATPase alpha/beta chains family. As to quaternary structure, has multiple subunits with at least A(3), B(3), C, D, E, F, H, I and proteolipid K(x).

It localises to the cell membrane. Functionally, component of the A-type ATP synthase that produces ATP from ADP in the presence of a proton gradient across the membrane. The B chain is a regulatory subunit. This Pyrobaculum aerophilum (strain ATCC 51768 / DSM 7523 / JCM 9630 / CIP 104966 / NBRC 100827 / IM2) protein is A-type ATP synthase subunit B.